A 392-amino-acid chain; its full sequence is Alanine--glyoxylate aminotransferase (392 aa).

Lys209 carries the post-translational modification N6-(pyridoxal phosphate)lysine. Lys225 carries the N6-acetyllysine; alternate modification. The residue at position 225 (Lys225) is an N6-succinyllysine; alternate. N6-acetyllysine is present on residues Lys234 and Lys312. Arg360 contacts substrate. A Microbody targeting signal motif is present at residues 390–392 (KKL).

Belongs to the class-V pyridoxal-phosphate-dependent aminotransferase family. As to quaternary structure, homodimer. It depends on pyridoxal 5'-phosphate as a cofactor.

Its subcellular location is the peroxisome. It catalyses the reaction L-serine + pyruvate = 3-hydroxypyruvate + L-alanine. The catalysed reaction is glyoxylate + L-alanine = glycine + pyruvate. Its function is as follows. Peroxisomal aminotransferase that catalyzes the transamination of glyoxylate to glycine and contributes to the glyoxylate detoxification. Also catalyzes the transamination between L-serine and pyruvate and contributes to gluconeogenesis from the L-serine metabolism. This Pongo abelii (Sumatran orangutan) protein is Alanine--glyoxylate aminotransferase.